The following is a 384-amino-acid chain: Decapping nuclease RAI1 (384 aa).

Position 168 (Glu168) interacts with a divalent metal cation. Glu217 serves as a coordination point for substrate. Residues Asp219, Glu237, and Leu238 each contribute to the a divalent metal cation site. Residues Lys239 and Gln263 each contribute to the substrate site.

The protein belongs to the DXO/Dom3Z family. Interacts with RAT1; the interaction is direct, stabilizes RAT1 protein structure and stimulates its exoribonuclease activity. The interaction also stimulates RAI1 pyrophosphohydrolase activity, probably by recruiting it to mRNA substrates. The cofactor is a divalent metal cation.

The protein resides in the nucleus. The enzyme catalyses a 5'-end NAD(+)-phospho-ribonucleoside in mRNA + H2O = a 5'-end phospho-ribonucleoside in mRNA + NAD(+) + H(+). The catalysed reaction is a 5'-end (N(7)-methyl 5'-triphosphoguanosine)-ribonucleoside-ribonucleotide in mRNA + H2O = a (N(7)-methyl 5'-triphosphoguanosine)-nucleoside + a 5'-end phospho-ribonucleoside in mRNA + H(+). It carries out the reaction a 5'-end triphospho-ribonucleoside in mRNA + H2O = a 5'-end phospho-ribonucleoside in mRNA + diphosphate + H(+). In terms of biological role, decapping enzyme for NAD-capped RNAs: specifically hydrolyzes the nicotinamide adenine dinucleotide (NAD) cap from a subset of RNAs by removing the entire NAD moiety from the 5'-end of an NAD-capped RNA. The NAD-cap is present at the 5'-end of some RNAs and snoRNAs. In contrast to the canonical 5'-end N7 methylguanosine (m7G) cap, the NAD cap promotes mRNA decay. Also acts as a non-canonical decapping enzyme that removes the entire cap structure of m7G capped or incompletely capped RNAs. Has decapping activity toward incomplete 5'-end m7G cap mRNAs such as unmethylated 5'-end-capped RNA (cap0), while it has no activity toward 2'-O-ribose methylated m7G cap (cap1). Also possesses RNA 5'-pyrophosphohydrolase activity by hydrolyzing the 5'-end triphosphate to release pyrophosphates. Stimulates exoribonuclease activity of Rat1, allowing it to degrade RNAs with stable secondary structure more effectively. This chain is Decapping nuclease RAI1 (RAI1), found in Kluyveromyces lactis (strain ATCC 8585 / CBS 2359 / DSM 70799 / NBRC 1267 / NRRL Y-1140 / WM37) (Yeast).